Consider the following 454-residue polypeptide: Aquaglyceroporin-9 (454 aa).

The Cytoplasmic segment spans residues Met1–Glu186. Residues Phe187–Ser207 form a helical membrane-spanning segment. The Extracellular segment spans residues Ser208–Ser216. A helical membrane pass occupies residues Ile217–Ala237. The Cytoplasmic segment spans residues His238–Lys257. Positions Asn240–Ala242 match the NPA 1 motif. Residues Phe258–Ala278 traverse the membrane as a helical segment. The Extracellular segment spans residues Asn279–Lys316. N-linked (GlcNAc...) asparagine glycosylation occurs at Asn299. A helical transmembrane segment spans residues Thr317 to Leu337. Residues Gln338–Leu351 are Cytoplasmic-facing. Residues Gly352–Ile372 traverse the membrane as a helical segment. Residues Asn373–Ala375 carry the NPA 2 motif. Residues Asn373–Val403 lie on the Extracellular side of the membrane. The chain crosses the membrane as a helical span at residues Pro404–Phe424. Over Thr425–Val454 the chain is Cytoplasmic.

It belongs to the MIP/aquaporin (TC 1.A.8) family.

Its subcellular location is the membrane. It carries out the reaction H2O(in) = H2O(out). The catalysed reaction is glycerol(in) = glycerol(out). Water channel required to facilitate the transport of water across membranes. May play a role in the vegetative growth and pathogenicity. The protein is Aquaglyceroporin-9 of Botryotinia fuckeliana (strain B05.10) (Noble rot fungus).